The primary structure comprises 93 residues: Small ribosomal subunit protein uS19 (93 aa).

It belongs to the universal ribosomal protein uS19 family.

Functionally, protein S19 forms a complex with S13 that binds strongly to the 16S ribosomal RNA. The polypeptide is Small ribosomal subunit protein uS19 (Alkaliphilus oremlandii (strain OhILAs) (Clostridium oremlandii (strain OhILAs))).